The primary structure comprises 1203 residues: ATP-dependent helicase/nuclease subunit A (1203 aa).

A UvrD-like helicase ATP-binding domain is found at 4–472 (VKLTPEQNEA…IRLKENFRSR (469 aa)). 25–32 (ASAGSGKT) is an ATP binding site. The UvrD-like helicase C-terminal domain occupies 503–785 (VQGNISDYPV…RVMTFHKSKG (283 aa)).

It belongs to the helicase family. AddA subfamily. As to quaternary structure, heterodimer of AddA and AddB/RexB. Requires Mg(2+) as cofactor.

It carries out the reaction Couples ATP hydrolysis with the unwinding of duplex DNA by translocating in the 3'-5' direction.. The enzyme catalyses ATP + H2O = ADP + phosphate + H(+). Its function is as follows. The heterodimer acts as both an ATP-dependent DNA helicase and an ATP-dependent, dual-direction single-stranded exonuclease. Recognizes the chi site generating a DNA molecule suitable for the initiation of homologous recombination. The AddA nuclease domain is required for chi fragment generation; this subunit has the helicase and 3' -&gt; 5' nuclease activities. This is ATP-dependent helicase/nuclease subunit A from Lactococcus lactis subsp. cremoris (strain SK11).